A 208-amino-acid chain; its full sequence is Large ribosomal subunit protein bL17 (208 aa).

Residues 122–208 (TEKKKKKPAK…ASEEAPPKTE (87 aa)) are disordered. Low complexity predominate over residues 151–179 (ADTPAPAAEESAPAKAAEPEAEAAAPEAE).

Belongs to the bacterial ribosomal protein bL17 family. Part of the 50S ribosomal subunit. Contacts protein L32.

In Desulfosudis oleivorans (strain DSM 6200 / JCM 39069 / Hxd3) (Desulfococcus oleovorans), this protein is Large ribosomal subunit protein bL17.